The primary structure comprises 411 residues: 2-acylphloroglucinol 4-prenyltransferase, chloroplastic (411 aa).

The transit peptide at 1 to 91 directs the protein to the chloroplast; it reads MELSSVSSFS…CNDQRGNSIR (91 aa). Transmembrane regions (helical) follow at residues 159-179, 198-218, 226-246, 253-273, 278-298, 333-353, 356-376, and 391-411; these read LLGM…NQIF, ISVE…FILI, LLTS…VPPF, ITAF…VYYA, LGLA…ITFM, LLGT…AIIW, AFKS…LIFQ, and KSFY…YLFI.

It belongs to the UbiA prenyltransferase family. Mg(2+) is required as a cofactor. In terms of tissue distribution, expressed in glandular trichomes called lupulin glands, and in early stage and mature cones. Detected in leaves, but not in root, stem and first stage of flowers. No expression in male flowers.

It is found in the plastid. It localises to the chloroplast membrane. The enzyme catalyses a 2-acylphloroglucinol + dimethylallyl diphosphate = a 2-acyl-4-prenylphloroglucinol + diphosphate. It functions in the pathway secondary metabolite biosynthesis. Functionally, involved in the biosynthesis of prenylated phenolics natural products which contribute to the bitter taste of beer and display broad biological activities. Catalyzes the first prenylation step in the beta-bitter acid pathway. Abble to transfer dimethylallyl diphosphate (DMAPP) or geranyl diphosphate (GPP) to phlorisovalerophenone (PIVP), phlorisobutrylphenone (PIMP) and naringenin chalcone. Can also use phlorisobutyrophenone (PIBP) and phlormethylbutanophenone (PMBP) as substrates, but not 6'-O-methylated chalcone or naringenin. The sequence is that of 2-acylphloroglucinol 4-prenyltransferase, chloroplastic from Humulus lupulus (European hop).